The primary structure comprises 328 residues: MRSHTGLRALVAPGCSLLLLYLLAATRPDRAVGDPADSAFTSLPVREEMMAKYANLSLETYNISLTEQTRVSEQNITLERPSHLELECTFTATEDVMSMNVTWKKDDALLETTDGFNTTKMGDTLYSQYRFTVFNSKQMGKYSCFLGEELRGTFNIRVPKVHGKNKPLITYVGDSTVLKCECQNCLPLNWTWYMSNGTAQVPIDVHVNDKFDINGSYANETKLKVKHLLEEDGGSYWCRAAFPLGESEEHIKLVVLSFMVPLKPFLAIIAEVILLVAIILLCEVYTQKKKNDPDDGKEFEQIEQLKSDDSNGIENNVPRYRKTDSGDQ.

A signal peptide spans 1–33 (MRSHTGLRALVAPGCSLLLLYLLAATRPDRAVG). The Extracellular portion of the chain corresponds to 34-264 (DPADSAFTSL…VLSFMVPLKP (231 aa)). N55, N62, N75, N100, N117, N189, N196, N214, and N219 each carry an N-linked (GlcNAc...) asparagine glycan. Ig-like domains are found at residues 67 to 160 (EQTR…RVPK) and 159 to 254 (PKVH…IKLV). 2 cysteine pairs are disulfide-bonded: C88–C144 and C180–C238. A helical transmembrane segment spans residues 265–285 (FLAIIAEVILLVAIILLCEVY). Residues 286 to 328 (TQKKKNDPDDGKEFEQIEQLKSDDSNGIENNVPRYRKTDSGDQ) are Cytoplasmic-facing. The span at 289-309 (KKNDPDDGKEFEQIEQLKSDD) shows a compositional bias: basic and acidic residues. Positions 289-328 (KKNDPDDGKEFEQIEQLKSDDSNGIENNVPRYRKTDSGDQ) are disordered. S310 carries the post-translational modification Phosphoserine.

As to quaternary structure, interacts with SLC16A1, SLC16A6 and SLC16A7. Post-translationally, N-glycosylated. In terms of tissue distribution, detected in prostate, mammary gland and erythrocytes (at protein level). Detected in testis, brain, prostate, heart, kidney, liver, mammary gland and lung.

The protein localises to the cell membrane. It is found in the synapse. In terms of biological role, plays a role in the outgrowth of motoneurons and in the formation of neuromuscular junctions. Following muscle denervation, promotes nerve terminal sprouting and the formation of additional acetylcholine receptor clusters at synaptic sites without affecting terminal Schwann cell number or morphology. Delays the retraction of terminal sprouts following re-innervation of denervated endplates. Plays a role in targeting the monocarboxylate transporters SLC16A1, SLC16A6 and SLC16A7 to the cell membrane. This is Embigin (Emb) from Rattus norvegicus (Rat).